The primary structure comprises 696 residues: Carotenoid dioxygenase carX (696 aa).

Over residues 1–16 (MKFLQQNSFTQTSMSQ) the composition is skewed to polar residues. Residues 1-27 (MKFLQQNSFTQTSMSQPHEDVSPPLRH) are disordered. Positions 244, 298, 361, and 642 each coordinate Fe(2+).

Belongs to the carotenoid oxygenase family. Fe(2+) serves as cofactor.

It catalyses the reaction all-trans-beta-carotene + O2 = 2 all-trans-retinal. Its pathway is carotenoid biosynthesis. In terms of biological role, carotenoid dioxygenase; part of the car gene cluster that mediates the biosynthesis of neurosporaxanthin, a carboxylic apocarotenoid acting as an essential protective pigments and leading to orange pigmentation. CarX mediates the cleavage of beta-carotene produced by carAR into retinal, the rhodopsin's chromophore that is involved in the regulation of the carotenoid biosynthetic pathway via a negative feedback mechanism. It can also convert the synthetic compound beta-apo-8'-carotenal but not C35-apocarotenoids such as the acidic apocarotenoid neurosporaxanthin (C35), as well as its corresponding aldehyde beta-apo-4'-carotenal. This is Carotenoid dioxygenase carX from Gibberella fujikuroi (strain CBS 195.34 / IMI 58289 / NRRL A-6831) (Bakanae and foot rot disease fungus).